A 366-amino-acid polypeptide reads, in one-letter code: MAGRLWGSPGGTPKGNGSSALLNVSQAAPGAGDGVRPRPSWLAATLASILIFTIVVDIVGNLLVVLSVYRNKKLRNAGNVFVVSLAVADLLVAVYPYPLALASIVNNGWSLSSLHCQLSGFLMGLSVIGSVFSITGIAINRYCCICHSLRYGKLYSGTNSLCYVFLIWTLTLVAIVPNLCVGTLQYDPRIYSCTFTQSVSSAYTIAVVVFHFIVPMLVVVFCYLRIWALVLQVRWKVKPDNKPKLKPQDFRNFVTMFVVFVLFAICWAPLNFIGLVVASDPASMAPRIPEWLFVASYYMAYFNSCLNAIIYGLLNQNFRQEYRKIIVSLCTTKMFFVDSSNHVADRIKRKPSPLIANHNLIKVDSV.

The Extracellular segment spans residues 1-45 (MAGRLWGSPGGTPKGNGSSALLNVSQAAPGAGDGVRPRPSWLAAT). Asn-16 and Asn-23 each carry an N-linked (GlcNAc...) asparagine glycan. A helical membrane pass occupies residues 46-66 (LASILIFTIVVDIVGNLLVVL). The Cytoplasmic portion of the chain corresponds to 67–79 (SVYRNKKLRNAGN). A helical membrane pass occupies residues 80–100 (VFVVSLAVADLLVAVYPYPLA). Over 101 to 118 (LASIVNNGWSLSSLHCQL) the chain is Extracellular. Cysteines 116 and 193 form a disulfide. Residues 119–139 (SGFLMGLSVIGSVFSITGIAI) traverse the membrane as a helical segment. Residues 140–158 (NRYCCICHSLRYGKLYSGT) lie on the Cytoplasmic side of the membrane. Residues 159 to 179 (NSLCYVFLIWTLTLVAIVPNL) traverse the membrane as a helical segment. The Extracellular segment spans residues 180–203 (CVGTLQYDPRIYSCTFTQSVSSAY). Residues 204 to 224 (TIAVVVFHFIVPMLVVVFCYL) traverse the membrane as a helical segment. At 225-256 (RIWALVLQVRWKVKPDNKPKLKPQDFRNFVTM) the chain is on the cytoplasmic side. Residues 257–277 (FVVFVLFAICWAPLNFIGLVV) traverse the membrane as a helical segment. At 278–290 (ASDPASMAPRIPE) the chain is on the extracellular side. A helical membrane pass occupies residues 291–311 (WLFVASYYMAYFNSCLNAIIY). Residues 312–366 (GLLNQNFRQEYRKIIVSLCTTKMFFVDSSNHVADRIKRKPSPLIANHNLIKVDSV) are Cytoplasmic-facing.

It belongs to the G-protein coupled receptor 1 family.

Its subcellular location is the cell membrane. High affinity receptor for melatonin. Likely to mediate the reproductive and circadian actions of melatonin. The activity of this receptor is mediated by pertussis toxin sensitive G proteins that inhibit adenylate cyclase activity. Possibly involved in sleep induction, by melatonin activation of the potassium channel KCNMA1/BK and the dissociation of G-beta and G-gamma subunits, thereby decreasing synaptic transmission. The chain is Melatonin receptor type 1A (MTNR1A) from Ovis aries (Sheep).